The primary structure comprises 301 residues: MINSIRIGTRNSPLALIQTNLVIQQIKQFFPDINCAIVPIITSGDLIQNKPLYDIGGKALFLKEIEQALLDKKIDLAVHSLKDVPGRIPEELVISAVLEREDPRDVFVCLNYKSIKELPQHSVIGSSAVRRKAFIQKIRPDLKVTIFRGNVDSRIKKLMTGEVDATILAYAGLKRLGAFNPEYCHLIEYSHMLPCVGQGVIAVEIRQNDNSMLEICNQINHLPTCELIKPERAFLEYLDANCRTPIGTYSQYLDADNIQTDFMLGNPDCSKITFHTEITNIKTSKEGGIKAAKMMLNQLKK.

Cys-242 bears the S-(dipyrrolylmethanemethyl)cysteine mark.

The protein belongs to the HMBS family. Monomer. It depends on dipyrromethane as a cofactor.

It carries out the reaction 4 porphobilinogen + H2O = hydroxymethylbilane + 4 NH4(+). It participates in porphyrin-containing compound metabolism; protoporphyrin-IX biosynthesis; coproporphyrinogen-III from 5-aminolevulinate: step 2/4. In terms of biological role, tetrapolymerization of the monopyrrole PBG into the hydroxymethylbilane pre-uroporphyrinogen in several discrete steps. The sequence is that of Porphobilinogen deaminase from Rickettsia akari (strain Hartford).